A 483-amino-acid polypeptide reads, in one-letter code: MTGNRSLVQRHRKKFVVSSVLFATLFATCAITVYFSKRWLYKQHLKMTEQRFVKEQIKRRFVQTQQDSLYTLYELMPVMTLVLAKDFDLDSIVEALKGKKLQKKLSKGEIAGNELENEGLSSGMSAMTPAPSVSAKSPQSADTTSVSETSTKSKAELWDDLKLKAITKIIILSYTTSLLMLLTRLQLNILARREYLDTAINSAMEKEREKKANQYSVLSWFSSWITEKSNNLPSEKADPRNSDGTIDTDTRSIASTANPEKSRYVNEQAFLSLSWWLLNRGYLQYKSIIEQLVKEEFQNSNPRDIMTMDEFSGKISKIFVTTNKQFFQQPQSNEMFISCLLPEPNLERFVLQQTLEQDALKVLYEDNLLLKQLVQETNKCLQSPGTWIVLESLIDETFHTIMEQIEDNVNSKSKPKSNDDDTKVVDISKNSYQIALFSIATKDCTNEMLKAGLVSMNNKFLQKLHSISALDDLSACVYSNFGL.

Topologically, residues 1-14 are peroxisomal; that stretch reads MTGNRSLVQRHRKK. A helical membrane pass occupies residues 15-35; sequence FVVSSVLFATLFATCAITVYF. Topologically, residues 36-483 are cytoplasmic; it reads SKRWLYKQHL…SACVYSNFGL (448 aa). Disordered regions lie at residues 119–149 and 230–253; these read GLSSGMSAMTPAPSVSAKSPQSADTTSVSET and NNLPSEKADPRNSDGTIDTDTRSI. Polar residues predominate over residues 242 to 253; it reads SDGTIDTDTRSI.

It belongs to the peroxin-3 family.

The protein resides in the peroxisome membrane. In terms of biological role, involved in peroxisome biosynthesis. In Kluyveromyces lactis (strain ATCC 8585 / CBS 2359 / DSM 70799 / NBRC 1267 / NRRL Y-1140 / WM37) (Yeast), this protein is Peroxisomal biogenesis factor 3 (PEX3).